The sequence spans 727 residues: Two-component response regulator-like APRR7 (727 aa).

Residues 1–47 form a disordered region; sequence MNANEEGEGSRYPITDRKTGETKFDRVESRTEKHSEEEKTNGITMDV. The segment covering 14–40 has biased composition (basic and acidic residues); it reads ITDRKTGETKFDRVESRTEKHSEEEKT. Residues 79 to 197 enclose the Response regulatory domain; sequence RVLLVENDDC…ELKILWQHVW (119 aa). Disordered stretches follow at residues 203 to 265, 291 to 312, 339 to 416, 464 to 487, 509 to 560, and 606 to 670; these read SSGS…KKAV, NPEF…QEHD, KDEP…KTLD, SRYN…SLQD, ESLP…QPLP, and VNGS…SQRE. The segment covering 246–259 has biased composition (low complexity); it reads ASDGSSDGSGAQSS. Polar residues-rich tracts occupy residues 344-353, 467-487, and 519-535; these read SKTTGIMRQD, NPAS…SLQD, and VGSN…NNAF. The segment covering 538–555 has biased composition (low complexity); that stretch reads PGAPKVSSAGSSSVKHSS. Residues 641–657 show a composition bias toward gly residues; it reads GKNGNGDGSGSGSGSGS. Residues 669–711 enclose the CCT domain; sequence REAALTKFRQKRKERCFRKKVRYQSRKKLAEQRPRVRGQFVRK.

This sequence belongs to the ARR-like family. Phosphorylated. Phosphorylation varies throughout the diurnal cycle.

The protein localises to the nucleus. Transcriptional repressor of CCA1 and LHY, and positive regulator of LWD1 and LWD2 expression. Represses the expression of other clock proteins and master regulators of plant growth, development and response to abiotic stress. Involved in the positive and negative feedback loops of the circadian clock. Controls photoperiodic flowering response and temperature compensation. Expression of several members of the ARR-like family is controlled by circadian rhythm. APRR9, APRR7, and APRR5 coordinately act on the upstream region of the target genes to repress their expression from noon until midnight. The particular coordinated sequential expression of APRR9, APRR7, APRR5, APRR3 and APPR1 result to circadian waves that may be at the basis of the endogenous circadian clock. The protein is Two-component response regulator-like APRR7 (APRR7) of Arabidopsis thaliana (Mouse-ear cress).